Consider the following 140-residue polypeptide: Small ribosomal subunit protein uS12m (140 aa).

This sequence belongs to the universal ribosomal protein uS12 family.

It localises to the mitochondrion. In Dictyostelium discoideum (Social amoeba), this protein is Small ribosomal subunit protein uS12m (mrps12).